A 729-amino-acid polypeptide reads, in one-letter code: DNA topoisomerase 3 (729 aa).

Residues 3–136 (KSVVIAEKPS…IKRLWISSVT (134 aa)) form the Toprim domain. Residues E9 and D105 each coordinate Mg(2+). Positions 153-594 (YDNLYASAVA…EMKNYTKEIV (442 aa)) constitute a Topo IA-type catalytic domain. The interval 187 to 192 (NCGRVQ) is interaction with DNA. Catalysis depends on Y310, which acts as the O-(5'-phospho-DNA)-tyrosine intermediate. A compositionally biased stretch (basic and acidic residues) spans 686 to 713 (ERRKKESGNKADKRDVQKYMKQQKKEEE). Positions 686 to 718 (ERRKKESGNKADKRDVQKYMKQQKKEEEPLNNP) are disordered.

This sequence belongs to the type IA topoisomerase family. It depends on Mg(2+) as a cofactor.

It carries out the reaction ATP-independent breakage of single-stranded DNA, followed by passage and rejoining.. Releases the supercoiling and torsional tension of DNA, which is introduced during the DNA replication and transcription, by transiently cleaving and rejoining one strand of the DNA duplex. Introduces a single-strand break via transesterification at a target site in duplex DNA. The scissile phosphodiester is attacked by the catalytic tyrosine of the enzyme, resulting in the formation of a DNA-(5'-phosphotyrosyl)-enzyme intermediate and the expulsion of a 3'-OH DNA strand. The free DNA strand then undergoes passage around the unbroken strand, thus removing DNA supercoils. Finally, in the religation step, the DNA 3'-OH attacks the covalent intermediate to expel the active-site tyrosine and restore the DNA phosphodiester backbone. In Bacillus cereus (strain ATCC 10987 / NRS 248), this protein is DNA topoisomerase 3.